Consider the following 252-residue polypeptide: JmjC domain-containing protein A (252 aa).

Positions 103–252 constitute a JmjC domain; it reads PYLRNFGMLD…VSCWGKEMIM (150 aa).

This chain is JmjC domain-containing protein A (jcdA), found in Dictyostelium discoideum (Social amoeba).